The primary structure comprises 195 residues: MELNTHNAEILLSAANKSHYPQDELPEIALAGRSNVGKSSFINTMLNRKNLARTSGKPGKTQLLNFFNIDDKMRFVDVPGYGYARVSKKEREKWGCMIEEYLTTRENLRAVVSLVDLRHDPSADDVQMYEFLKYYEIPVIIVATKADKIPRGKWNKHESAIKKKLNFDPSDDFILFSSVSKAGMDEAWDAILEKL.

In terms of domain architecture, EngB-type G spans 24–195; the sequence is ELPEIALAGR…EAWDAILEKL (172 aa). Residues 32–39, 59–63, 77–80, 144–147, and 176–178 contribute to the GTP site; these read GRSNVGKS, GKTQL, DVPG, TKAD, and FSS. 2 residues coordinate Mg(2+): serine 39 and threonine 61.

Belongs to the TRAFAC class TrmE-Era-EngA-EngB-Septin-like GTPase superfamily. EngB GTPase family. Mg(2+) serves as cofactor.

Its function is as follows. Necessary for normal cell division and for the maintenance of normal septation. The polypeptide is Probable GTP-binding protein EngB (Streptococcus pneumoniae serotype 4 (strain ATCC BAA-334 / TIGR4)).